A 696-amino-acid chain; its full sequence is Chitin synthase regulator SKT5 (696 aa).

Disordered regions lie at residues 37 to 67 (GQDFSDNKENRENRDNEDFSTADLPKRSANQ) and 90 to 145 (QEED…IKKR). The segment covering 41–53 (SDNKENRENRDNE) has biased composition (basic and acidic residues). Over residues 104–126 (LNNSNNTSLSSLGSTPTNSPSPG) the composition is skewed to low complexity. The span at 129–139 (RQTNSSTSLTK) shows a compositional bias: polar residues. A Phosphoserine modification is found at S148. Sel1-like repeat units follow at residues 271–306 (SDAQYLLADGYSSGAFGKIENKEAFVLFQAAAKHGH), 307–342 (IESAYRASHCLEEGLGTTRDSRKSVNFLKFAASRNH), 343–382 (PSAMYKLGLYSFYGRMGLPTDVNTKLNGVKWLSRAAARAN), 386–423 (AAAPYELAKIYHEGFLDVVIPDEKYAMELYIQAASLGH), 424–460 (VPSATLLAQIYETGNDTVGQDTSLSVHYYTQAALKGD), 461–498 (SVAMLGLCAWYLLGAEPAFEKDENEAFQWALRAANAGL), and 499–534 (PKAQFTLGYFYEHGKGCDRNMEYAWKWYEKAAGNED). S561 and S563 each carry phosphoserine. T564 is modified (phosphothreonine). Polar residues-rich tracts occupy residues 576–593 (SNVGSNSRVSSKSETFFT), 605–634 (LQINMNSNTNRNGIKTGSDTSIRKSSSSAK), and 651–661 (VSLSNMGSSNM). Residues 576 to 696 (SNVGSNSRVS…GKKKKDCVIM (121 aa)) are disordered. The span at 662–675 (IRKDFPAVKTESKK) shows a compositional bias: basic and acidic residues. Positions 680–696 (KNKKDKQGKKKKDCVIM) are enriched in basic residues. A Cysteine methyl ester modification is found at C693. C693 is lipidated: S-farnesyl cysteine. Positions 694–696 (VIM) are cleaved as a propeptide — removed in mature form.

This sequence belongs to the SKT5 family. In terms of assembly, may interact with CHS3 and seems to be an adapter (along with BNI4) to link CHS3 to septins. Farnesylation is required for chitin synthase CHS3 activity but is not required for SKT5 membrane association.

The protein localises to the cell membrane. Functionally, activator of the chitin synthase CHS3 which polymerizes chitin, a structural polymer of the fungal cell wall. This Saccharomyces cerevisiae (strain ATCC 204508 / S288c) (Baker's yeast) protein is Chitin synthase regulator SKT5.